Consider the following 392-residue polypeptide: Ribosomal RNA large subunit methyltransferase G (392 aa).

Belongs to the methyltransferase superfamily. RlmG family.

The protein localises to the cytoplasm. The enzyme catalyses guanosine(1835) in 23S rRNA + S-adenosyl-L-methionine = N(2)-methylguanosine(1835) in 23S rRNA + S-adenosyl-L-homocysteine + H(+). In terms of biological role, specifically methylates the guanine in position 1835 (m2G1835) of 23S rRNA. This Colwellia psychrerythraea (strain 34H / ATCC BAA-681) (Vibrio psychroerythus) protein is Ribosomal RNA large subunit methyltransferase G.